We begin with the raw amino-acid sequence, 372 residues long: MALKFHVLHQSKKSRARVGKIETAHGIIDTPAFVPVATNGALKGVIDHSNIPLMFCNTYHLLVHPGTEAIAAMGGLHKFMNRNAPIITDSGGFQIFSLAYGSVAEEIKSRGKKKGSSSILEVNDEGVWFKSYRDGHKLFLSPEVSVQAQKDLGADIIIPLDELLPFHSDEKYFLSSCSRTYVWEKRSLDYHKKDPRHQSMYGVIHGGIDPEQRKIGCQFVEDHPFDGFAIGGSLGRNLQEMLPVVDVTTSYLSKDRPVHLLGIGDLPSIHATVGLGIDSFDSSYPTKAARHGLILSSQGPIKIANQAYANDLSSLDPECTCATCTSNISRAYLRHLFKVHEPNAAIWASIHNLHYMQEVMKNIREQILNDEI.

The active-site Proton acceptor is Asp-89. Substrate contacts are provided by residues 89 to 93 (DSGGF), Asp-161, and Gly-232. Positions 262–268 (GIGDLPS) are RNA binding. Asp-281 (nucleophile) is an active-site residue. The tract at residues 286-290 (TKAAR) is RNA binding; important for wobble base 34 recognition. Zn(2+)-binding residues include Cys-319, Cys-321, Cys-324, and His-351.

The protein belongs to the queuine tRNA-ribosyltransferase family. In terms of assembly, homodimer. Within each dimer, one monomer is responsible for RNA recognition and catalysis, while the other monomer binds to the replacement base PreQ1. It depends on Zn(2+) as a cofactor.

It catalyses the reaction 7-aminomethyl-7-carbaguanine + guanosine(34) in tRNA = 7-aminomethyl-7-carbaguanosine(34) in tRNA + guanine. Its pathway is tRNA modification; tRNA-queuosine biosynthesis. Catalyzes the base-exchange of a guanine (G) residue with the queuine precursor 7-aminomethyl-7-deazaguanine (PreQ1) at position 34 (anticodon wobble position) in tRNAs with GU(N) anticodons (tRNA-Asp, -Asn, -His and -Tyr). Catalysis occurs through a double-displacement mechanism. The nucleophile active site attacks the C1' of nucleotide 34 to detach the guanine base from the RNA, forming a covalent enzyme-RNA intermediate. The proton acceptor active site deprotonates the incoming PreQ1, allowing a nucleophilic attack on the C1' of the ribose to form the product. After dissociation, two additional enzymatic reactions on the tRNA convert PreQ1 to queuine (Q), resulting in the hypermodified nucleoside queuosine (7-(((4,5-cis-dihydroxy-2-cyclopenten-1-yl)amino)methyl)-7-deazaguanosine). The sequence is that of Queuine tRNA-ribosyltransferase from Chlamydia caviae (strain ATCC VR-813 / DSM 19441 / 03DC25 / GPIC) (Chlamydophila caviae).